A 677-amino-acid polypeptide reads, in one-letter code: Fermitin family homolog 1 (677 aa).

Residues 96-653 (MLRLRLPNLK…HEYIGGYIFL (558 aa)) enclose the FERM domain. Phosphoserine occurs at positions 170, 179, and 361. A PH domain is found at 337–433 (ESEVDEIEAA…EVVPNVNVAE (97 aa)).

The protein belongs to the kindlin family. Interacts with the cytoplasmic domain of integrins ITGB1 and ITGB3.

It localises to the cytoplasm. It is found in the cytoskeleton. The protein localises to the cell junction. The protein resides in the focal adhesion. Its subcellular location is the cell projection. It localises to the ruffle membrane. Functionally, involved in cell adhesion. Contributes to integrin activation. When coexpressed with talin, potentiates activation of ITGA2B. Required for normal keratinocyte proliferation. Required for normal polarization of basal keratinocytes in skin, and for normal cell shape. Required for normal adhesion of keratinocytes to fibronectin and laminin, and for normal keratinocyte migration to wound sites. The polypeptide is Fermitin family homolog 1 (FERMT1) (Pongo abelii (Sumatran orangutan)).